The following is a 185-amino-acid chain: Comitin (185 aa).

In terms of domain architecture, Bulb-type lectin spans 1-123 (MELLRQGEHL…YKQILYSSKP (123 aa)). Positions 138–185 (SGHPQSAYPPQQPGYGYPAQPGYPPQPGYPPQHGYPPQHGYPQQPGYY) are disordered. Residues 141-157 (PQSAYPPQQPGYGYPAQ) show a composition bias toward low complexity. Tandem repeats lie at residues 153–158 (GYPAQP), 159–164 (GYPPQP), 165–170 (GYPPQH), 171–176 (GYPPQH), and 177–182 (GYPQQP). The tract at residues 153 to 182 (GYPAQPGYPPQPGYPPQHGYPPQHGYPQQP) is 5 X 6 AA tandem repeats of G-Y-P-X-Q-[PH]. The span at 158 to 171 (PGYPPQPGYPPQHG) shows a compositional bias: pro residues. A compositionally biased stretch (low complexity) spans 172–185 (YPPQHGYPQQPGYY).

As to quaternary structure, homodimer in solution. The N-terminus is blocked.

The protein localises to the golgi apparatus membrane. It localises to the endomembrane system. The protein resides in the cytoplasm. Its subcellular location is the cytoskeleton. May have a role in cell motility. It has high affinity for both G-actin and F-actin. Binds to vesicle membranes via mannose residues and, by way of its interaction with actin, links these membranes to the cytoskeleton. The sequence is that of Comitin (comA) from Dictyostelium discoideum (Social amoeba).